The sequence spans 171 residues: Pro-corazonin (171 aa).

Residues 1-20 form the signal peptide; it reads MLHTRTIALLLVGLVVLVNA. Gln21 carries the pyrrolidone carboxylic acid modification. Asn31 bears the Asparagine amide mark. A propeptide spanning residues 82–171 is cleaved from the precursor; it reads FLRNPCDLRV…GFSDHRQKIA (90 aa).

Belongs to the corazonin family.

The protein resides in the secreted. Its function is as follows. Cardioactive peptide. Corazonin is probably involved in the physiological regulation of the heart beat. The sequence is that of Pro-corazonin from Anopheles gambiae (African malaria mosquito).